Here is an 811-residue protein sequence, read N- to C-terminus: Hypoxia-inducible factor 1-alpha (811 aa).

The interval 1–27 is disordered; sequence MDSPGGVTDKKRISSERRKEKSRDAAR. A compositionally biased stretch (basic and acidic residues) spans 8 to 27; sequence TDKKRISSERRKEKSRDAAR. Residues 17-70 form the bHLH domain; it reads RRKEKSRDAARCRRSKESEVFYELAHQLPLPHTVSAHLDKASIMRLTISYLRMR. PAS domains follow at residues 80-157 and 228-298; these read TEAN…PVKK and PHPS…FTKG. The 44-residue stretch at 302–345 folds into the PAC domain; the sequence is TGQYRMLAKQGGYVWVETQATVIYNTKNSQPQCIVCVNYVLSGI. Positions 401-587 are ODD; it reads APAAGDTIIS…LSPLESSSSG (187 aa). P402 bears the 4-hydroxyproline mark. The tract at residues 490-518 is disordered; sequence PQVQEQPTSPSDASTSQSSPEPSSPNDYC. Residues 496 to 514 show a composition bias toward low complexity; sequence PTSPSDASTSQSSPEPSSP. Positions 529–573 are NTAD; that stretch reads FKLELVEKLFAIDTEAKNPFSTQETDLDLEMLAPYIPMDDDFQLR. Residue P562 is modified to 4-hydroxyproline. The interval 576–785 is ID; the sequence is DQLSPLESSS…GLPQLTSYDC (210 aa). Residues 634-652 show a composition bias toward polar residues; sequence NDTSSAPASPYSGNRSRTA. A disordered region spans residues 634-655; the sequence is NDTSSAPASPYSGNRSRTASPI. Short sequence motifs (nuclear localization signal) lie at residues 703–706 and 718–721; these read RKRK and GIGS. A CTAD region spans residues 771–811; that stretch reads SMDESGLPQLTSYDCEVNAPIQGNRNLLQGEELLRALDQVN. At N788 the chain carries (3S)-3-hydroxyasparagine.

In terms of assembly, efficient DNA binding requires heterodimerization of an alpha and a beta/ARNT subunit. In normoxia, is hydroxylated on Pro-402 and Pro-562. The hydroxylated prolines promote interaction with VHL, initiating rapid ubiquitination and subsequent proteasomal degradation. Under hypoxia, proline hydroxylation is impaired and ubiquitination is attenuated, resulting in stabilization. Post-translationally, in normoxia, is hydroxylated on Asn-788, thus abrogating interaction with CREBBP and EP300 and preventing transcriptional activation. In terms of processing, the iron and 2-oxoglutarate dependent 3-hydroxylation of asparagine is (S) stereospecific within HIF CTAD domains.

It is found in the cytoplasm. It localises to the nucleus. Its subcellular location is the nucleus speckle. Induced by reactive oxygen species (ROS). Functionally, functions as a master transcriptional regulator of the adaptive response to hypoxia. Under hypoxic conditions, activates the transcription of over 40 genes, including erythropoietin, glucose transporters, glycolytic enzymes, vascular endothelial growth factor, HILPDA, and other genes whose protein products increase oxygen delivery or facilitate metabolic adaptation to hypoxia. Plays an essential role in embryonic vascularization, tumor angiogenesis and pathophysiology of ischemic disease. The protein is Hypoxia-inducible factor 1-alpha (HIF1A) of Gallus gallus (Chicken).